The chain runs to 98 residues: NADH-ubiquinone oxidoreductase chain 4L (98 aa).

A run of 3 helical transmembrane segments spans residues 1–21, 29–49, and 61–81; these read MHYIYINIIIAFSMSLLGALL, SLLCLEGMMLALFVLSTLIAL, and IILLVFAACEAAIGLSLLVMV.

It belongs to the complex I subunit 4L family. In terms of assembly, core subunit of respiratory chain NADH dehydrogenase (Complex I) which is composed of 45 different subunits.

Its subcellular location is the mitochondrion inner membrane. It catalyses the reaction a ubiquinone + NADH + 5 H(+)(in) = a ubiquinol + NAD(+) + 4 H(+)(out). Core subunit of the mitochondrial membrane respiratory chain NADH dehydrogenase (Complex I) which catalyzes electron transfer from NADH through the respiratory chain, using ubiquinone as an electron acceptor. Part of the enzyme membrane arm which is embedded in the lipid bilayer and involved in proton translocation. This chain is NADH-ubiquinone oxidoreductase chain 4L (MT-ND4L), found in Procavia capensis (Rock hyrax).